A 416-amino-acid polypeptide reads, in one-letter code: Tryptophan synthase beta chain (416 aa).

The tract at residues 1 to 23 (MTSTLPSQPKDMELANSSRPSVH) is disordered. At Lys-109 the chain carries N6-(pyridoxal phosphate)lysine.

The protein belongs to the TrpB family. In terms of assembly, tetramer of two alpha and two beta chains. Requires pyridoxal 5'-phosphate as cofactor.

It catalyses the reaction (1S,2R)-1-C-(indol-3-yl)glycerol 3-phosphate + L-serine = D-glyceraldehyde 3-phosphate + L-tryptophan + H2O. Its pathway is amino-acid biosynthesis; L-tryptophan biosynthesis; L-tryptophan from chorismate: step 5/5. The beta subunit is responsible for the synthesis of L-tryptophan from indole and L-serine. The protein is Tryptophan synthase beta chain of Prochlorococcus marinus (strain MIT 9211).